We begin with the raw amino-acid sequence, 505 residues long: MEKLQGHRELDRSWQHNFFYPLIFQEYIYVFAYDHALNKLILLENAIAKKSSLLIVKRLITRMYQQNHFILSVNDSNQNEIFGHKHKKNLYSQMITEGFAVIVEIPFSLLLISSLEGKEIVESQNLRSIHSIFPFLEDKFLHLNYVLDILIPYPAHLEILVQTLRYWLKDASSLHLLRYFLYEYRNWNSLIRPKESISPFSKRNRRLFLFLYNLLVYEYESLFVILRKQSSYLRSTSFGALLERIHFYGKLKYLVKVKVKVFGVILWLFKEPFLHYVRYQGKCLLASKGTSFLMYKWKYYFIAFWQCHFSVWSQPRRIYINQLSNYSLDFMGFISNVGLNSSVIRSQMLENSFLVDNIIKKFDTIVPIIPLVGSLAKAKFCNGLGHPISKSVWTDLSDADIIDRFGRICRNLSHYYSGSSRKKSLYRIKYILRLSCARTLSRKHKSTVRAFLKRLGSEFLEEFFTEEEKVLSLILPRDSSTLSGFYRGRVWYLDIICIHNLANDE.

It belongs to the intron maturase 2 family. MatK subfamily.

It localises to the plastid. The protein localises to the chloroplast. Usually encoded in the trnK tRNA gene intron. Probably assists in splicing its own and other chloroplast group II introns. This Amaranthus greggii (Gregg's amaranth) protein is Maturase K.